The chain runs to 407 residues: UPF0597 protein NAMH_0191 (407 aa).

Belongs to the UPF0597 family.

In Nautilia profundicola (strain ATCC BAA-1463 / DSM 18972 / AmH), this protein is UPF0597 protein NAMH_0191.